Reading from the N-terminus, the 495-residue chain is Meiosis-specific nuclear structural protein 1 (495 aa).

Positions 1 to 314 are interaction with BBOF1; that stretch reads MGSKRRNLSC…KLEEMLRQRE (314 aa). Residues 28-410 are a coiled coil; the sequence is VQALKNVNSQ…QLEHRRAVEK (383 aa). Tyrosine 188 is modified (phosphotyrosine).

The protein belongs to the MNS1 family. In terms of assembly, able to form oligomers. Microtubule inner protein component of sperm flagellar doublet microtubules. Interacts with ODAD1. Interacts with BBOF1. Expressed in nasal respiratory epithelium and in the sperm.

The protein resides in the nucleus. The protein localises to the cytoplasm. Its subcellular location is the cytoskeleton. It localises to the cilium axoneme. It is found in the flagellum axoneme. In terms of biological role, microtubule inner protein (MIP) part of the dynein-decorated doublet microtubules (DMTs) in cilia axoneme, which is required for motile cilia beating. May play a role in the control of meiotic division and germ cell differentiation through regulation of pairing and recombination during meiosis. Required for sperm flagella assembly. May play a role in the assembly and function of the outer dynein arm-docking complex (ODA-DC). ODA-DC mediates outer dynein arms (ODA) binding onto the axonemal doublet microtubules. This Homo sapiens (Human) protein is Meiosis-specific nuclear structural protein 1.